The following is a 38-amino-acid chain: Photosystem II reaction center protein L (38 aa).

A helical transmembrane segment spans residues 17–37 (SLYWGLLLIFVLAVLFSNYFF).

Belongs to the PsbL family. PSII is composed of 1 copy each of membrane proteins PsbA, PsbB, PsbC, PsbD, PsbE, PsbF, PsbH, PsbI, PsbJ, PsbK, PsbL, PsbM, PsbT, PsbX, PsbY, PsbZ, Psb30/Ycf12, at least 3 peripheral proteins of the oxygen-evolving complex and a large number of cofactors. It forms dimeric complexes.

It localises to the plastid. The protein resides in the chloroplast thylakoid membrane. One of the components of the core complex of photosystem II (PSII). PSII is a light-driven water:plastoquinone oxidoreductase that uses light energy to abstract electrons from H(2)O, generating O(2) and a proton gradient subsequently used for ATP formation. It consists of a core antenna complex that captures photons, and an electron transfer chain that converts photonic excitation into a charge separation. This subunit is found at the monomer-monomer interface and is required for correct PSII assembly and/or dimerization. The polypeptide is Photosystem II reaction center protein L (Antirrhinum majus (Garden snapdragon)).